Consider the following 150-residue polypeptide: MKVVVQRVKRAAVTNKSIHNEIDKGFCLLVGIGKDTTEADIDAVAKKIINARLFEDENGKLNLNIQQVEGQILSISQFTLYADVRKGNRPGFSNSKNPEEANVLYEKFNTALKAYDVEVKTGEFGTDMEVEIINDGPVTIIYESQDGKII.

The short motif at 136-137 is the Gly-cisPro motif, important for rejection of L-amino acids element; the sequence is GP.

This sequence belongs to the DTD family. As to quaternary structure, homodimer.

The protein resides in the cytoplasm. It carries out the reaction glycyl-tRNA(Ala) + H2O = tRNA(Ala) + glycine + H(+). It catalyses the reaction a D-aminoacyl-tRNA + H2O = a tRNA + a D-alpha-amino acid + H(+). An aminoacyl-tRNA editing enzyme that deacylates mischarged D-aminoacyl-tRNAs. Also deacylates mischarged glycyl-tRNA(Ala), protecting cells against glycine mischarging by AlaRS. Acts via tRNA-based rather than protein-based catalysis; rejects L-amino acids rather than detecting D-amino acids in the active site. By recycling D-aminoacyl-tRNA to D-amino acids and free tRNA molecules, this enzyme counteracts the toxicity associated with the formation of D-aminoacyl-tRNA entities in vivo and helps enforce protein L-homochirality. The sequence is that of D-aminoacyl-tRNA deacylase from Staphylococcus haemolyticus (strain JCSC1435).